Here is a 466-residue protein sequence, read N- to C-terminus: Histone acetyltransferase type B catalytic subunit DDB_G0275159 (466 aa).

The N-acetyltransferase domain maps to 169-366; sequence AVFRYHEKLQ…FRIAIKKRLY (198 aa). Residues 240-242 and 247-253 contribute to the acetyl-CoA site; these read YLI and QRMGHGK. Glutamate 279 (proton donor/acceptor) is an active-site residue. Residues 372-459 adopt a coiled-coil conformation; sequence DSEQIEKMKQ…LEENYHKTLS (88 aa).

This sequence belongs to the HAT1 family.

It carries out the reaction L-lysyl-[protein] + acetyl-CoA = N(6)-acetyl-L-lysyl-[protein] + CoA + H(+). This Dictyostelium discoideum (Social amoeba) protein is Histone acetyltransferase type B catalytic subunit DDB_G0275159.